A 363-amino-acid polypeptide reads, in one-letter code: Phospho-N-acetylmuramoyl-pentapeptide-transferase (363 aa).

11 consecutive transmembrane segments (helical) span residues 27–47 (AGAACLTALAISLLLGNPLIA), 76–96 (TMGGVLILAALFGSTLLWADL), 97–117 (TDGYVWAVLLTTLSFGAVGFA), 137–157 (LGCEFAASLVGGYWMQSLMPA), 171–191 (WLLPLGFAFPLFAMITITGFG), 202–222 (GLAIVPVIIAALVFGLISYLV), 226–246 (VFADYLQLHAVPGTGELCVFC), 248–268 (ALVGAGLGFLWFNAPPAAVFM), 271–291 (TGSLSLGGALGAIAVAVKHEL), 292–312 (VLCIVGGLFVVETLSVIIQVF), and 340–360 (KIVIRFWIVSIVLGLCGLATL).

It belongs to the glycosyltransferase 4 family. MraY subfamily. Mg(2+) serves as cofactor.

Its subcellular location is the cell inner membrane. It carries out the reaction UDP-N-acetyl-alpha-D-muramoyl-L-alanyl-gamma-D-glutamyl-meso-2,6-diaminopimeloyl-D-alanyl-D-alanine + di-trans,octa-cis-undecaprenyl phosphate = di-trans,octa-cis-undecaprenyl diphospho-N-acetyl-alpha-D-muramoyl-L-alanyl-D-glutamyl-meso-2,6-diaminopimeloyl-D-alanyl-D-alanine + UMP. It functions in the pathway cell wall biogenesis; peptidoglycan biosynthesis. Catalyzes the initial step of the lipid cycle reactions in the biosynthesis of the cell wall peptidoglycan: transfers peptidoglycan precursor phospho-MurNAc-pentapeptide from UDP-MurNAc-pentapeptide onto the lipid carrier undecaprenyl phosphate, yielding undecaprenyl-pyrophosphoryl-MurNAc-pentapeptide, known as lipid I. This Gluconacetobacter diazotrophicus (strain ATCC 49037 / DSM 5601 / CCUG 37298 / CIP 103539 / LMG 7603 / PAl5) protein is Phospho-N-acetylmuramoyl-pentapeptide-transferase.